Consider the following 457-residue polypeptide: Glutamate--tRNA ligase 2 (457 aa).

Residues 9–19 (PSPTGRIHIGN) carry the 'HIGH' region motif. The 'KMSKS' region signature appears at 250-254 (GLSKR). K253 lines the ATP pocket.

The protein belongs to the class-I aminoacyl-tRNA synthetase family. Glutamate--tRNA ligase type 1 subfamily. In terms of assembly, monomer.

The protein localises to the cytoplasm. It catalyses the reaction tRNA(Glu) + L-glutamate + ATP = L-glutamyl-tRNA(Glu) + AMP + diphosphate. In terms of biological role, catalyzes the attachment of glutamate to tRNA(Glu) in a two-step reaction: glutamate is first activated by ATP to form Glu-AMP and then transferred to the acceptor end of tRNA(Glu). In Mesorhizobium japonicum (strain LMG 29417 / CECT 9101 / MAFF 303099) (Mesorhizobium loti (strain MAFF 303099)), this protein is Glutamate--tRNA ligase 2.